Consider the following 949-residue polypeptide: Glycine dehydrogenase (decarboxylating) (949 aa).

Position 704 is an N6-(pyridoxal phosphate)lysine (K704).

This sequence belongs to the GcvP family. The glycine cleavage system is composed of four proteins: P, T, L and H. The cofactor is pyridoxal 5'-phosphate.

The enzyme catalyses N(6)-[(R)-lipoyl]-L-lysyl-[glycine-cleavage complex H protein] + glycine + H(+) = N(6)-[(R)-S(8)-aminomethyldihydrolipoyl]-L-lysyl-[glycine-cleavage complex H protein] + CO2. In terms of biological role, the glycine cleavage system catalyzes the degradation of glycine. The P protein binds the alpha-amino group of glycine through its pyridoxal phosphate cofactor; CO(2) is released and the remaining methylamine moiety is then transferred to the lipoamide cofactor of the H protein. The protein is Glycine dehydrogenase (decarboxylating) of Bacteroides thetaiotaomicron (strain ATCC 29148 / DSM 2079 / JCM 5827 / CCUG 10774 / NCTC 10582 / VPI-5482 / E50).